A 486-amino-acid polypeptide reads, in one-letter code: METRHHLNTKMVPSYQAPLSKVTAADLTVERLPGCKYMNPSKKHILREEYRDKVKHIMYDPRPQEDLDAEYPVSCNKLVCELAAARKHLHFNPSETSIGIVTCGGICPGLNDVIRSITLTGIISYRVKRVVGFRYGYWGLSKEGSKTAIELSRSDVRQIHRFGGTILGSSRGPQNPKEMVDTLVRMKINILFTVGGDGTQRGALTIYEEAKRPGENIAVFGVPKTIDNDLAFSHRTFGFQTAVEQAVNAVRAAYAEAVSLNYGVGIVKLMGRESGFIAAQTTVASAQANICLIPENPLPKETVMRLIERRLQQSRNCVIVVAEGFGQDWETGTGGHDASGNKKLVDIGFILKKEVESWLRANKEKFPQGTVKYIDPSYMIRACPPSSNDALFCTNLATLAVHEAMAGATGCIISMRYNNYILVPIKAATSVRRVVSLRGALWRQVREITVGLSDDVQQWNEQDLRRHLESLNVERERIIARLASKV.

Residues Gly-105, 171 to 172, and 196 to 199 each bind ATP; these read RG and GDGT. Asp-197 is a binding site for Mg(2+). Residues 225–227, 270–272, Glu-323, and 378–381 each bind substrate; these read TID, MGR, and YMIR. Asp-227 functions as the Proton acceptor in the catalytic mechanism. Residues 484 to 486 carry the Peroxisomal targeting signal motif; the sequence is SKV.

This sequence belongs to the phosphofructokinase type A (PFKA) family. PPi-dependent PFK group II subfamily. Atypical ATP-dependent clade 'X' sub-subfamily. As to quaternary structure, homotetramer. Mg(2+) serves as cofactor.

Its subcellular location is the glycosome. The enzyme catalyses beta-D-fructose 6-phosphate + ATP = beta-D-fructose 1,6-bisphosphate + ADP + H(+). It functions in the pathway carbohydrate degradation; glycolysis; D-glyceraldehyde 3-phosphate and glycerone phosphate from D-glucose: step 3/4. Allosterically activated by AMP. Catalyzes the phosphorylation of D-fructose 6-phosphate to fructose 1,6-bisphosphate by ATP, the first committing step of glycolysis. The polypeptide is ATP-dependent 6-phosphofructokinase (Leishmania donovani).